The chain runs to 234 residues: L-cystine transport system permease protein TcyB (234 aa).

Transmembrane regions (helical) follow at residues 8–28 (ALTL…WPIL), 36–56 (IPLT…TALA), 78–98 (TPLL…NVTL), 100–120 (PFPS…SEII), and 199–219 (ILVI…LLSL). Residues 32-221 (IYYTIPLTIL…IICFLLSLVQ (190 aa)) form the ABC transmembrane type-1 domain.

The protein belongs to the binding-protein-dependent transport system permease family. As to quaternary structure, the complex is composed of two ATP-binding proteins (TcyC), two transmembrane proteins (TcyB) and a solute-binding protein (TcyA).

It is found in the cell membrane. Its function is as follows. Part of the ABC transporter complex TcyABC involved in L-cystine import. Probably responsible for the translocation of the substrate across the membrane. The sequence is that of L-cystine transport system permease protein TcyB (tcyB) from Bacillus subtilis (strain 168).